The primary structure comprises 88 residues: Small ribosomal subunit protein uS15c (88 aa).

It belongs to the universal ribosomal protein uS15 family. In terms of assembly, part of the 30S ribosomal subunit.

Its subcellular location is the plastid. The protein resides in the chloroplast. The sequence is that of Small ribosomal subunit protein uS15c (rps15) from Capsella bursa-pastoris (Shepherd's purse).